Consider the following 103-residue polypeptide: ATP synthase F(0) complex subunit g, mitochondrial (103 aa).

Residue alanine 2 is modified to N-acetylalanine. 4 positions are modified to N6-acetyllysine: lysine 11, lysine 24, lysine 35, and lysine 54.

It belongs to the ATPase g subunit family. Component of the ATP synthase complex composed at least of ATP5F1A/subunit alpha, ATP5F1B/subunit beta, ATP5MC1/subunit c (homooctomer), MT-ATP6/subunit a, MT-ATP8/subunit 8, ATP5ME/subunit e, ATP5MF/subunit f, ATP5MG/subunit g, ATP5MK/subunit k, ATP5MJ/subunit j, ATP5F1C/subunit gamma, ATP5F1D/subunit delta, ATP5F1E/subunit epsilon, ATP5PF/subunit F6, ATP5PB/subunit b, ATP5PD/subunit d, ATP5PO/subunit OSCP. ATP synthase complex consists of a soluble F(1) head domain (subunits alpha(3) and beta(3)) - the catalytic core - and a membrane F(0) domain - the membrane proton channel (subunits c, a, 8, e, f, g, k and j). These two domains are linked by a central stalk (subunits gamma, delta, and epsilon) rotating inside the F1 region and a stationary peripheral stalk (subunits F6, b, d, and OSCP).

Its subcellular location is the mitochondrion. The protein localises to the mitochondrion inner membrane. Subunit g, of the mitochondrial membrane ATP synthase complex (F(1)F(0) ATP synthase or Complex V) that produces ATP from ADP in the presence of a proton gradient across the membrane which is generated by electron transport complexes of the respiratory chain. ATP synthase complex consist of a soluble F(1) head domain - the catalytic core - and a membrane F(1) domain - the membrane proton channel. These two domains are linked by a central stalk rotating inside the F(1) region and a stationary peripheral stalk. During catalysis, ATP synthesis in the catalytic domain of F(1) is coupled via a rotary mechanism of the central stalk subunits to proton translocation. In vivo, can only synthesize ATP although its ATP hydrolase activity can be activated artificially in vitro. Part of the complex F(0) domain. This chain is ATP synthase F(0) complex subunit g, mitochondrial, found in Mus musculus (Mouse).